Consider the following 89-residue polypeptide: Small ribosomal subunit protein uS14 (89 aa).

Zn(2+)-binding residues include C52, C55, C68, and C71.

This sequence belongs to the universal ribosomal protein uS14 family. In terms of assembly, part of the 30S ribosomal subunit. Contacts proteins S3 and S10. The cofactor is Zn(2+).

Its function is as follows. Binds 16S rRNA, required for the assembly of 30S particles and may also be responsible for determining the conformation of the 16S rRNA at the A site. The protein is Small ribosomal subunit protein uS14 (rpsN) of Salinibacter ruber (strain DSM 13855 / M31).